The primary structure comprises 483 residues: Glutamate--tRNA ligase (483 aa).

The 'HIGH' region signature appears at 11 to 21 (PSPTGLLHIGN). A 'KMSKS' region motif is present at residues 255–259 (KLSKR). K258 provides a ligand contact to ATP.

It belongs to the class-I aminoacyl-tRNA synthetase family. Glutamate--tRNA ligase type 1 subfamily. Monomer.

The protein resides in the cytoplasm. The catalysed reaction is tRNA(Glu) + L-glutamate + ATP = L-glutamyl-tRNA(Glu) + AMP + diphosphate. In terms of biological role, catalyzes the attachment of glutamate to tRNA(Glu) in a two-step reaction: glutamate is first activated by ATP to form Glu-AMP and then transferred to the acceptor end of tRNA(Glu). In Lactococcus lactis subsp. cremoris (strain SK11), this protein is Glutamate--tRNA ligase.